The sequence spans 88 residues: Acyl-CoA-binding domain-containing protein 7 (88 aa).

The region spanning 3-88 (LQADFDQAAQ…ARELIEKYGI (86 aa)) is the ACB domain. An acyl-CoA-binding positions include arginine 15, 30–34 (YGLYK), lysine 56, and tyrosine 75.

This sequence belongs to the ACBD7 family.

In terms of biological role, binds medium- and long-chain acyl-CoA esters. This is Acyl-CoA-binding domain-containing protein 7 (Acbd7) from Mus musculus (Mouse).